The sequence spans 350 residues: Sodium/calcium exchanger MaX1 (350 aa).

10 consecutive transmembrane segments (helical) span residues 4–24 (VNFL…DYFV), 39–59 (FVIG…ASSI), 69–89 (IVIG…VGVA), 101–121 (MLKR…VFAF), 125–145 (LSML…FFLF), 202–222 (GGFA…VIGA), 242–264 (VIGT…VSAA), 276–296 (VIGS…LFYP), 302–322 (MSLF…LIFI), and 330–350 (RWEG…LFYI).

This sequence belongs to the Ca(2+):cation antiporter (CaCA) (TC 2.A.19) family.

The protein resides in the cell membrane. With respect to regulation, calcium transport is inhibited by Na(+), K(+), Li(+), Mg(2+) or Mn(2+). Catalyzes Na(+)/Ca(2+) exchange. The transport is electrogenic with a likely stoichiometry of 3 or more Na(+) for each Ca(2+). Is K(+)-independent. The polypeptide is Sodium/calcium exchanger MaX1 (maX1) (Methanosarcina acetivorans (strain ATCC 35395 / DSM 2834 / JCM 12185 / C2A)).